The primary structure comprises 130 residues: Small ribosomal subunit protein uS9 (130 aa).

It belongs to the universal ribosomal protein uS9 family.

This Anaeromyxobacter dehalogenans (strain 2CP-1 / ATCC BAA-258) protein is Small ribosomal subunit protein uS9.